Consider the following 265-residue polypeptide: Inositol-1-monophosphatase (265 aa).

Residues glutamate 69, aspartate 87, isoleucine 89, and aspartate 90 each contribute to the Mg(2+) site. Glutamate 69 lines the substrate pocket. Residues 89-92, arginine 185, and aspartate 214 contribute to the substrate site; that span reads IDGT. Position 214 (aspartate 214) interacts with Mg(2+).

Belongs to the inositol monophosphatase superfamily. Mg(2+) serves as cofactor.

It carries out the reaction a myo-inositol phosphate + H2O = myo-inositol + phosphate. The catalysed reaction is a ribonucleoside 5'-phosphate + H2O = a ribonucleoside + phosphate. Its function is as follows. Hydrolyzes myo-inositol monophosphate. Catalyzes the dephosphorylation of GMP and IMP. This chain is Inositol-1-monophosphatase, found in Bacillus subtilis (strain 168).